The primary structure comprises 388 residues: Probable tRNA sulfurtransferase (388 aa).

One can recognise a THUMP domain in the interval 55–162 (VTLDDKLKKI…PEGVLIFTDR (108 aa)). ATP contacts are provided by residues 180–181 (LL), 205–206 (TF), Arg264, Gly286, and Gln295.

Belongs to the ThiI family.

The protein resides in the cytoplasm. The catalysed reaction is [ThiI sulfur-carrier protein]-S-sulfanyl-L-cysteine + a uridine in tRNA + 2 reduced [2Fe-2S]-[ferredoxin] + ATP + H(+) = [ThiI sulfur-carrier protein]-L-cysteine + a 4-thiouridine in tRNA + 2 oxidized [2Fe-2S]-[ferredoxin] + AMP + diphosphate. It catalyses the reaction [ThiS sulfur-carrier protein]-C-terminal Gly-Gly-AMP + S-sulfanyl-L-cysteinyl-[cysteine desulfurase] + AH2 = [ThiS sulfur-carrier protein]-C-terminal-Gly-aminoethanethioate + L-cysteinyl-[cysteine desulfurase] + A + AMP + 2 H(+). Its pathway is cofactor biosynthesis; thiamine diphosphate biosynthesis. Its function is as follows. Catalyzes the ATP-dependent transfer of a sulfur to tRNA to produce 4-thiouridine in position 8 of tRNAs, which functions as a near-UV photosensor. Also catalyzes the transfer of sulfur to the sulfur carrier protein ThiS, forming ThiS-thiocarboxylate. This is a step in the synthesis of thiazole, in the thiamine biosynthesis pathway. The sulfur is donated as persulfide by IscS. This Thermotoga maritima (strain ATCC 43589 / DSM 3109 / JCM 10099 / NBRC 100826 / MSB8) protein is Probable tRNA sulfurtransferase.